A 311-amino-acid polypeptide reads, in one-letter code: GTP cyclohydrolase MptA (311 aa).

Belongs to the GTP cyclohydrolase IV family. In terms of assembly, homodimer. Fe(2+) is required as a cofactor.

It carries out the reaction GTP + H2O = 7,8-dihydroneopterin 2',3'-cyclic phosphate + formate + diphosphate + H(+). Its pathway is cofactor biosynthesis; 5,6,7,8-tetrahydromethanopterin biosynthesis. Converts GTP to 7,8-dihydro-D-neopterin 2',3'-cyclic phosphate, the first intermediate in the biosynthesis of coenzyme methanopterin. This Methanobrevibacter smithii (strain ATCC 35061 / DSM 861 / OCM 144 / PS) protein is GTP cyclohydrolase MptA.